Here is a 451-residue protein sequence, read N- to C-terminus: Velvet complex subunit 2 (451 aa).

Disordered regions lie at residues 1-95 (MNTT…PRSI), 205-312 (PGQS…QTNP), and 426-451 (PIRKDGKDGPGKGGKDGSRGDDDDDY). 3 stretches are compositionally biased toward polar residues: residues 18 to 28 (TMPSLHDTTYR), 40 to 62 (MPQTMASQHSTISAYEQYNNSLP), and 205 to 217 (PGQSQREPTSPTY). Residues 92–428 (PRSITVDGRK…ATQGIKIPIR (337 aa)) enclose the Velvet domain. Low complexity predominate over residues 267 to 283 (PQQSNYYYPQPSQSIPS). Residues 427–445 (IRKDGKDGPGKGGKDGSRG) show a composition bias toward basic and acidic residues.

It belongs to the velvet family. VelB subfamily. In terms of assembly, component of the heterotrimeric velvet complex composed of LAE1, VEL1 and VEL2; VEL1 acting as a bridging protein between LAE1 and VEL2. Forms a heterodimeric complex with VOS1; the formation of the VEL2-VOS1 complex is light-dependent.

It localises to the nucleus. Its subcellular location is the cytoplasm. In terms of biological role, component of the velvet transcription factor complex that controls sexual/asexual developmental ratio in response to light, promoting sexual development in the darkness while stimulating asexual sporulation under illumination. The velvet complex acts as a global regulator for secondary metabolite gene expression. Component of the VEL2-VOS1 heterodimeric complex that plays a dual role in activating genes associated with spore maturation and repressing certain development-associated genes. The VEL2-VOS1 complex binds DNA through the DNA-binding domain of VOS1 that recognizes an 11-nucleotide consensus sequence 5'-CTGGCCGCGGC-3' consisting of two motifs in the promoters of key developmental regulatory genes. Controls the expression of the oxalic acid and melanin gene clusters. Involved in the resistance to oxidative stress. Required for full virulence. The polypeptide is Velvet complex subunit 2 (Botryotinia fuckeliana (strain B05.10) (Noble rot fungus)).